The primary structure comprises 150 residues: Large ribosomal subunit protein bL9 (150 aa).

It belongs to the bacterial ribosomal protein bL9 family.

Functionally, binds to the 23S rRNA. This is Large ribosomal subunit protein bL9 from Arthrobacter sp. (strain FB24).